A 750-amino-acid chain; its full sequence is Alpha-galactosidase C (750 aa).

Positions 1-26 are cleaved as a signal peptide; that stretch reads MFRSTATVAAATAMGLLTATGHGSLA. Residues Asn-58, Asn-162, Asn-186, Asn-194, Asn-366, Asn-428, Asn-432, and Asn-453 are each glycosylated (N-linked (GlcNAc...) asparagine). Asp-511 acts as the Nucleophile in catalysis. Residue Asp-573 is the Proton donor of the active site.

Belongs to the glycosyl hydrolase 36 family. As to quaternary structure, homotetramer. Mg(2+) is required as a cofactor. The cofactor is NAD(+).

Its subcellular location is the secreted. It carries out the reaction Hydrolysis of terminal, non-reducing alpha-D-galactose residues in alpha-D-galactosides, including galactose oligosaccharides, galactomannans and galactolipids.. Its function is as follows. Hydrolyzes a variety of simple alpha-D-galactoside as well as more complex molecules such as oligosaccharides and polysaccharides. Active on paranitrophenyl-alpha-galactoside, raffinose, locust bean gum and gum guar. In Emericella nidulans (strain FGSC A4 / ATCC 38163 / CBS 112.46 / NRRL 194 / M139) (Aspergillus nidulans), this protein is Alpha-galactosidase C (aglC).